The chain runs to 23 residues: Magainin-R2 (23 aa).

As to expression, expressed by the skin glands.

It is found in the secreted. Its function is as follows. Antimicrobial peptide. This is Magainin-R2 from Xenopus ruwenzoriensis (Uganda clawed frog).